A 452-amino-acid polypeptide reads, in one-letter code: Maltoporin (452 aa).

Residues 1–25 form the signal peptide; sequence MMITLRKLPLAVAVAAGVMSAQAMA.

The protein belongs to the porin LamB (TC 1.B.3) family. Homotrimer formed of three 18-stranded antiparallel beta-barrels, containing three independent channels.

It is found in the cell outer membrane. The catalysed reaction is beta-maltose(in) = beta-maltose(out). In terms of biological role, involved in the transport of maltose and maltodextrins. In Salmonella agona (strain SL483), this protein is Maltoporin.